We begin with the raw amino-acid sequence, 244 residues long: MAQAVEEWYKQMPIITRSYLTAAVVTTVGCSLEIISPYNLYLNPTLVVKQYQFWRLVTNFLYFRKMDLDFLFHMFFLARYCKLLEENSFRGKTADFLYMLLFGATVLTGIVLIGGMIPYLSVSFSKIIFLSNSLTFMMVYVWSKQNPYIHMSFLGLFTFTAAYLPWVLLGFSILVGASAWGDFLGMIAGHAYYFLAFVYPRMTDRRPLKTPSFLKALFADEPVVIARPEDVRFAHAPFDEIHQD.

Topologically, residues 1 to 21 (MAQAVEEWYKQMPIITRSYLT) are cytoplasmic. Residues 22 to 42 (AAVVTTVGCSLEIISPYNLYL) form a helical membrane-spanning segment. The Lumenal segment spans residues 43 to 96 (NPTLVVKQYQFWRLVTNFLYFRKMDLDFLFHMFFLARYCKLLEENSFRGKTADF). A helical membrane pass occupies residues 97 to 117 (LYMLLFGATVLTGIVLIGGMI). Residues 118 to 121 (PYLS) are Cytoplasmic-facing. Residues 122–142 (VSFSKIIFLSNSLTFMMVYVW) traverse the membrane as a helical segment. Residues 143 to 152 (SKQNPYIHMS) are Lumenal-facing. Residues 153–173 (FLGLFTFTAAYLPWVLLGFSI) traverse the membrane as a helical segment. The Cytoplasmic portion of the chain corresponds to 174-244 (LVGASAWGDF…HAPFDEIHQD (71 aa)).

The protein belongs to the derlin family.

Its subcellular location is the endoplasmic reticulum membrane. Its function is as follows. May be involved in the degradation process of specific misfolded endoplasmic reticulum (ER) luminal proteins. The sequence is that of Derlin-2.1 (DER2.1) from Arabidopsis thaliana (Mouse-ear cress).